A 255-amino-acid polypeptide reads, in one-letter code: Glutamate racemase (255 aa).

Substrate-binding positions include 7–8 (DS) and 39–40 (YG). Cysteine 70 acts as the Proton donor/acceptor in catalysis. A substrate-binding site is contributed by 71–72 (NT). Cysteine 181 acts as the Proton donor/acceptor in catalysis. 182-183 (TH) contacts substrate.

The protein belongs to the aspartate/glutamate racemases family.

It catalyses the reaction L-glutamate = D-glutamate. It functions in the pathway cell wall biogenesis; peptidoglycan biosynthesis. Its function is as follows. Provides the (R)-glutamate required for cell wall biosynthesis. The protein is Glutamate racemase of Helicobacter pylori (strain HPAG1).